Here is a 551-residue protein sequence, read N- to C-terminus: Glucan 1,4-alpha-maltotetraohydrolase (551 aa).

The N-terminal stretch at 1–21 (MSHILRAAVLAAVLLPFPALA) is a signal peptide. Ca(2+)-binding residues include D22, Q23, H34, D37, and E38. 99 to 100 (YF) is a substrate binding site. N137 contacts Ca(2+). Position 138 (H138) interacts with substrate. An intrachain disulfide couples C161 to C171. The Ca(2+) site is built by D172 and D175. A substrate-binding site is contributed by 177–181 (FIGGE). D183 provides a ligand contact to Ca(2+). R212 provides a ligand contact to substrate. Residue D214 is the Nucleophile of the active site. Residue G218 coordinates Ca(2+). Residues C237 and C272 are joined by a disulfide bond. The Proton donor role is filled by E240. Substrate contacts are provided by H314 and Q326. In terms of domain architecture, CBM20 spans 449-551 (GGEGGLVNVN…AAGASTSGSF (103 aa)).

The protein belongs to the glycosyl hydrolase 13 family. In terms of assembly, monomer. Ca(2+) is required as a cofactor.

The protein resides in the secreted. The enzyme catalyses Hydrolysis of (1-&gt;4)-alpha-D-glucosidic linkages in amylaceous polysaccharides, to remove successive maltotetraose residues from the non-reducing chain ends.. Its pathway is glycan degradation; starch degradation. In Roseateles saccharophilus (Pseudomonas saccharophila), this protein is Glucan 1,4-alpha-maltotetraohydrolase (mta).